A 181-amino-acid polypeptide reads, in one-letter code: Translation initiation factor IF-3 (181 aa).

It belongs to the IF-3 family. As to quaternary structure, monomer.

Its subcellular location is the cytoplasm. Functionally, IF-3 binds to the 30S ribosomal subunit and shifts the equilibrium between 70S ribosomes and their 50S and 30S subunits in favor of the free subunits, thus enhancing the availability of 30S subunits on which protein synthesis initiation begins. This chain is Translation initiation factor IF-3, found in Mycoplasma capricolum subsp. capricolum (strain California kid / ATCC 27343 / NCTC 10154).